We begin with the raw amino-acid sequence, 467 residues long: Iroquois-class homeodomain protein irx-1 (467 aa).

Residues aspartate 126–asparagine 188 constitute a DNA-binding region (homeobox; TALE-type). 3 disordered regions span residues glutamate 198 to lysine 307, serine 319 to histidine 342, and serine 410 to alanine 467. Composition is skewed to acidic residues over residues glutamate 215–isoleucine 225 and asparagine 233–glutamate 244. The segment covering lysine 245–glutamate 262 has biased composition (basic and acidic residues). Positions lysine 415–proline 431 are enriched in basic and acidic residues. Residues arginine 447–isoleucine 460 are compositionally biased toward polar residues.

This sequence belongs to the TALE/IRO homeobox family. In terms of tissue distribution, expressed in the neural plate in overlapping patterns with other irx members, which all share an anterior border of expression. Also expressed in the mesoderm, placodes and notochord. Broadly expressed in the tailbud rhombencephalon (hindbrain). Outside the nervous system and at tailbud stages, expressed in the developing otic vesicle, branchial arches, prospective heart region and pronephros.

The protein resides in the nucleus. Acts partially redundantly with other irx members in neural patterning. Required for formation of the posterior forebrain, midbrain, hindbrain, and to a lesser extent, spinal cord. Acts early in neural plate development to induce expression of some but not all proneural genes, and specify a neural precursor state. Also up-regulates repressors that prevent neuronal differentiation. Patterns the neuroectoderm in both the anterior/posterior and dorsal/ventral axes. Acts primarily as a transcriptional repressor during neural development, and binds to the bmp4 promoter to repress gene expression and thus mediate down-regulation of bmp4 by wnt signaling. Controls multiple processes through bmp4-repression including neural plate development, neural crest specification and Spemann organizer development. Involved in the specification of the preplacodal field at the anterior border of the neural plate. Regulates the genetic cascade of interactions that are necessary for positioning the isthmus organizer and the formation of the midbrain-hindbrain boundary. Required during at least two stages of pronephros kidney development; during neurula stages, maintains transcription of key renal genes to define the size and identity of the pronephric anlage, probably in part through regulation of bmp-signaling. Subsequently required for proper formation of the intermediate tubule segment of the pronephros. Acts principally as a transcriptional activator during pronephros development. The protein is Iroquois-class homeodomain protein irx-1 of Xenopus tropicalis (Western clawed frog).